Consider the following 427-residue polypeptide: Serine--tRNA ligase (427 aa).

Thr229 to Glu231 contributes to the L-serine binding site. Arg260–Glu262 contacts ATP. Residue Glu283 coordinates L-serine. Glu347–Ser350 provides a ligand contact to ATP. Residue Ser383 coordinates L-serine.

Belongs to the class-II aminoacyl-tRNA synthetase family. Type-1 seryl-tRNA synthetase subfamily. As to quaternary structure, homodimer. The tRNA molecule binds across the dimer.

It localises to the cytoplasm. It carries out the reaction tRNA(Ser) + L-serine + ATP = L-seryl-tRNA(Ser) + AMP + diphosphate + H(+). The enzyme catalyses tRNA(Sec) + L-serine + ATP = L-seryl-tRNA(Sec) + AMP + diphosphate + H(+). Its pathway is aminoacyl-tRNA biosynthesis; selenocysteinyl-tRNA(Sec) biosynthesis; L-seryl-tRNA(Sec) from L-serine and tRNA(Sec): step 1/1. Functionally, catalyzes the attachment of serine to tRNA(Ser). Is also able to aminoacylate tRNA(Sec) with serine, to form the misacylated tRNA L-seryl-tRNA(Sec), which will be further converted into selenocysteinyl-tRNA(Sec). This Nitrosococcus oceani (strain ATCC 19707 / BCRC 17464 / JCM 30415 / NCIMB 11848 / C-107) protein is Serine--tRNA ligase.